A 259-amino-acid polypeptide reads, in one-letter code: Glutamate racemase (259 aa).

Substrate-binding positions include 7–8 (DS) and 39–40 (YG). Residue Cys70 is the Proton donor/acceptor of the active site. 71–72 (NT) is a binding site for substrate. The Proton donor/acceptor role is filled by Cys180. 181–182 (TH) contacts substrate.

The protein belongs to the aspartate/glutamate racemases family.

The enzyme catalyses L-glutamate = D-glutamate. Its pathway is cell wall biogenesis; peptidoglycan biosynthesis. Provides the (R)-glutamate required for cell wall biosynthesis. This is Glutamate racemase from Persephonella marina (strain DSM 14350 / EX-H1).